The primary structure comprises 183 residues: RFKKIRRLGALPGLTSKRPRSGSDLKNQLRSGKRSQYRIRLEEKQKLRFHYGLTERQLLKYVHIAGKAKGSTGQILLQLLEMRLDNILFRLGMASTIPGARQLVNHRHILVNGRIVDIPSYRCKPRDIITTKNKQRSKALIQNFIASSPHQEELPNHLTIDPFQYKGLVNQIIDSKWIGLKIN.

The region spanning 82–143 (MRLDNILFRL…KQRSKALIQN (62 aa)) is the S4 RNA-binding domain.

The protein belongs to the universal ribosomal protein uS4 family. Part of the 30S ribosomal subunit. Contacts protein S5. The interaction surface between S4 and S5 is involved in control of translational fidelity.

The protein localises to the plastid. Its subcellular location is the chloroplast. Functionally, one of the primary rRNA binding proteins, it binds directly to 16S rRNA where it nucleates assembly of the body of the 30S subunit. Its function is as follows. With S5 and S12 plays an important role in translational accuracy. The sequence is that of Small ribosomal subunit protein uS4c (rps4) from Gladiolus communis (Cornflag).